A 299-amino-acid polypeptide reads, in one-letter code: Probable lipid kinase YegS (299 aa).

The DAGKc domain maps to 2–133 (AEFPASLLIL…IDMAQVNKQT (132 aa)). ATP is bound by residues Thr-40, 66–72 (GDGTINE), and Thr-95. The Mg(2+) site is built by Leu-215, Asp-218, and Leu-220. The active-site Proton acceptor is the Glu-271.

Belongs to the diacylglycerol/lipid kinase family. YegS lipid kinase subfamily. The cofactor is Mg(2+). Requires Ca(2+) as cofactor.

The protein resides in the cytoplasm. Probably phosphorylates lipids; the in vivo substrate is unknown. The protein is Probable lipid kinase YegS of Escherichia coli O6:K15:H31 (strain 536 / UPEC).